A 257-amino-acid polypeptide reads, in one-letter code: 3-deoxy-manno-octulosonate cytidylyltransferase (257 aa).

Belongs to the KdsB family.

Its subcellular location is the cytoplasm. It catalyses the reaction 3-deoxy-alpha-D-manno-oct-2-ulosonate + CTP = CMP-3-deoxy-beta-D-manno-octulosonate + diphosphate. The protein operates within nucleotide-sugar biosynthesis; CMP-3-deoxy-D-manno-octulosonate biosynthesis; CMP-3-deoxy-D-manno-octulosonate from 3-deoxy-D-manno-octulosonate and CTP: step 1/1. It functions in the pathway bacterial outer membrane biogenesis; lipopolysaccharide biosynthesis. In terms of biological role, activates KDO (a required 8-carbon sugar) for incorporation into bacterial lipopolysaccharide in Gram-negative bacteria. In Albidiferax ferrireducens (strain ATCC BAA-621 / DSM 15236 / T118) (Rhodoferax ferrireducens), this protein is 3-deoxy-manno-octulosonate cytidylyltransferase.